Consider the following 289-residue polypeptide: NFU1 iron-sulfur cluster scaffold homolog, mitochondrial (289 aa).

A mitochondrion-targeting transit peptide spans 1–56; it reads MAKLISYAKGGFLRNTRLTSRAVPQVYQHATSSRGFVHLTSSVAQSSAIHVSTPST. Positions 183–251 are nifU; the sequence is IKELLDTRIR…IPEVESVEQV (69 aa). [4Fe-4S] cluster contacts are provided by Cys-220 and Cys-223. Residues 267–289 form a disordered region; sequence ERNLKQKDTSSTAPVGIGGGPAN.

This sequence belongs to the NifU family.

The protein resides in the mitochondrion. Its function is as follows. Molecular scaffold for [Fe-S] cluster assembly of mitochondrial iron-sulfur proteins. This is NFU1 iron-sulfur cluster scaffold homolog, mitochondrial from Drosophila willistoni (Fruit fly).